A 174-amino-acid polypeptide reads, in one-letter code: Large ribosomal subunit protein uL10 (174 aa).

Belongs to the universal ribosomal protein uL10 family. Part of the ribosomal stalk of the 50S ribosomal subunit. The N-terminus interacts with L11 and the large rRNA to form the base of the stalk. The C-terminus forms an elongated spine to which L12 dimers bind in a sequential fashion forming a multimeric L10(L12)X complex.

Functionally, forms part of the ribosomal stalk, playing a central role in the interaction of the ribosome with GTP-bound translation factors. The protein is Large ribosomal subunit protein uL10 of Rubrobacter xylanophilus (strain DSM 9941 / JCM 11954 / NBRC 16129 / PRD-1).